The chain runs to 48 residues: ATP synthase protein 8 (48 aa).

The helical transmembrane segment at 4–24 threads the bilayer; it reads LVPFFFVNQVVYAFVILTVLI.

It belongs to the ATPase protein 8 family. F-type ATPases have 2 components, CF(1) - the catalytic core - and CF(0) - the membrane proton channel.

The protein localises to the mitochondrion membrane. Mitochondrial membrane ATP synthase (F(1)F(0) ATP synthase or Complex V) produces ATP from ADP in the presence of a proton gradient across the membrane which is generated by electron transport complexes of the respiratory chain. F-type ATPases consist of two structural domains, F(1) - containing the extramembraneous catalytic core and F(0) - containing the membrane proton channel, linked together by a central stalk and a peripheral stalk. During catalysis, ATP synthesis in the catalytic domain of F(1) is coupled via a rotary mechanism of the central stalk subunits to proton translocation. Part of the complex F(0) domain. Minor subunit located with subunit a in the membrane. The protein is ATP synthase protein 8 (atp8) of Aspergillus amstelodami.